We begin with the raw amino-acid sequence, 262 residues long: Putative hydro-lyase Sca_2211 (262 aa).

This sequence belongs to the D-glutamate cyclase family.

The polypeptide is Putative hydro-lyase Sca_2211 (Staphylococcus carnosus (strain TM300)).